The sequence spans 216 residues: ATP-dependent Clp protease proteolytic subunit (216 aa).

Ser120 acts as the Nucleophile in catalysis. Residue His145 is part of the active site.

This sequence belongs to the peptidase S14 family. In terms of assembly, fourteen ClpP subunits assemble into 2 heptameric rings which stack back to back to give a disk-like structure with a central cavity, resembling the structure of eukaryotic proteasomes.

Its subcellular location is the cytoplasm. The enzyme catalyses Hydrolysis of proteins to small peptides in the presence of ATP and magnesium. alpha-casein is the usual test substrate. In the absence of ATP, only oligopeptides shorter than five residues are hydrolyzed (such as succinyl-Leu-Tyr-|-NHMec, and Leu-Tyr-Leu-|-Tyr-Trp, in which cleavage of the -Tyr-|-Leu- and -Tyr-|-Trp bonds also occurs).. Cleaves peptides in various proteins in a process that requires ATP hydrolysis. Has a chymotrypsin-like activity. Plays a major role in the degradation of misfolded proteins. This chain is ATP-dependent Clp protease proteolytic subunit, found in Cupriavidus metallidurans (strain ATCC 43123 / DSM 2839 / NBRC 102507 / CH34) (Ralstonia metallidurans).